The primary structure comprises 335 residues: Ferrochelatase (335 aa).

His-207 and Glu-288 together coordinate Fe cation.

It belongs to the ferrochelatase family.

It localises to the cytoplasm. The catalysed reaction is heme b + 2 H(+) = protoporphyrin IX + Fe(2+). Its pathway is porphyrin-containing compound metabolism; protoheme biosynthesis; protoheme from protoporphyrin-IX: step 1/1. Functionally, catalyzes the ferrous insertion into protoporphyrin IX. In Helicobacter pylori (strain J99 / ATCC 700824) (Campylobacter pylori J99), this protein is Ferrochelatase.